Reading from the N-terminus, the 402-residue chain is Nicotinate phosphoribosyltransferase (402 aa).

Residue His224 is modified to Phosphohistidine; by autocatalysis.

Belongs to the NAPRTase family. Transiently phosphorylated on a His residue during the reaction cycle. Phosphorylation strongly increases the affinity for substrates and increases the rate of nicotinate D-ribonucleotide production. Dephosphorylation regenerates the low-affinity form of the enzyme, leading to product release.

The catalysed reaction is nicotinate + 5-phospho-alpha-D-ribose 1-diphosphate + ATP + H2O = nicotinate beta-D-ribonucleotide + ADP + phosphate + diphosphate. The protein operates within cofactor biosynthesis; NAD(+) biosynthesis; nicotinate D-ribonucleotide from nicotinate: step 1/1. Its function is as follows. Catalyzes the synthesis of beta-nicotinate D-ribonucleotide from nicotinate and 5-phospho-D-ribose 1-phosphate at the expense of ATP. This is Nicotinate phosphoribosyltransferase from Neisseria meningitidis serogroup A / serotype 4A (strain DSM 15465 / Z2491).